Here is a 310-residue protein sequence, read N- to C-terminus: MARTSESSPYVEFDRKQWRTLRKSTPLVLTEEELYGLRGLGEQIDLEEVAEVYLPLSRLIHLQVAARQRLFAATATFLGEKHPDQQVPFVIGVAGSVAVGKSTTARVLQALLARWEHHPRVDLVTTDGFLYPTAELNRRGIMHRKGFPESYDRRKLLRFVTEVKSGAEEVAAPVYSHISYDIIPGQYHLIRQPDILIIEGLNVLQTGPRLMVSDLFDFSIYVDARIEDIENWYIQRFLALRKTSFSDPDAHFHHYAGLSDRDATSAAQEIWHNINRPNLVENILPTRPRATLVLRKDANHSINRLRLRKL.

95–102 (GSVAVGKS) contacts ATP.

It belongs to the prokaryotic pantothenate kinase family.

It localises to the cytoplasm. It carries out the reaction (R)-pantothenate + ATP = (R)-4'-phosphopantothenate + ADP + H(+). It participates in cofactor biosynthesis; coenzyme A biosynthesis; CoA from (R)-pantothenate: step 1/5. The sequence is that of Pantothenate kinase from Rhodococcus opacus (strain B4).